The chain runs to 312 residues: 2,3-dihydroxyphenylpropionate/2,3-dihydroxicinnamic acid 1,2-dioxygenase 1 (312 aa).

His115 acts as the Proton donor in catalysis. His179 acts as the Proton acceptor in catalysis.

It belongs to the LigB/MhpB extradiol dioxygenase family. As to quaternary structure, homotetramer. Fe(2+) serves as cofactor.

It catalyses the reaction 3-(2,3-dihydroxyphenyl)propanoate + O2 = (2Z,4E)-2-hydroxy-6-oxonona-2,4-dienedioate + H(+). The catalysed reaction is (2E)-3-(2,3-dihydroxyphenyl)prop-2-enoate + O2 = (2Z,4E,7E)-2-hydroxy-6-oxonona-2,4,7-trienedioate + H(+). The protein operates within aromatic compound metabolism; 3-phenylpropanoate degradation. Catalyzes the non-heme iron(II)-dependent oxidative cleavage of 2,3-dihydroxyphenylpropionic acid and 2,3-dihydroxicinnamic acid into 2-hydroxy-6-ketononadienedioate and 2-hydroxy-6-ketononatrienedioate, respectively. This Dechloromonas aromatica (strain RCB) protein is 2,3-dihydroxyphenylpropionate/2,3-dihydroxicinnamic acid 1,2-dioxygenase 1.